The sequence spans 230 residues: Oxygen-evolving enhancer protein 3-2, chloroplastic (230 aa).

A chloroplast-targeting transit peptide spans 1–49 (MAQAVTSMAGLRGASQAVLEGSLQINGSNRLNISRVSVGSQRTGLVIRA). The N-terminal 33 residues, 50–82 (QQNVSVPESSRRSVIGLVAAGLAGGSFVKAVFA), are a transit peptide targeting the thylakoid. Ser-125 is subject to Phosphoserine. Thr-195 is modified (phosphothreonine). At Tyr-215 the chain carries Phosphotyrosine. A Phosphoserine modification is found at Ser-216. Thr-218 carries the post-translational modification Phosphothreonine.

Belongs to the PsbQ family.

Its subcellular location is the plastid. The protein resides in the chloroplast thylakoid membrane. In terms of biological role, required for photosystem II assembly/stability and photoautotrophic growth under low light conditions. The protein is Oxygen-evolving enhancer protein 3-2, chloroplastic (PSBQ2) of Arabidopsis thaliana (Mouse-ear cress).